The primary structure comprises 269 residues: Phosphate import ATP-binding protein PstB (269 aa).

An ABC transporter domain is found at 14–253 (LTLEDVSISY…EFDSTKKIFS (240 aa)). Residue 46 to 53 (GPSGCGKS) participates in ATP binding.

The protein belongs to the ABC transporter superfamily. Phosphate importer (TC 3.A.1.7) family. The complex is composed of two ATP-binding proteins (PstB), two transmembrane proteins (PstC and PstA) and a solute-binding protein (PstS).

It localises to the cell inner membrane. The catalysed reaction is phosphate(out) + ATP + H2O = ADP + 2 phosphate(in) + H(+). Part of the ABC transporter complex PstSACB involved in phosphate import. Responsible for energy coupling to the transport system. In Prochlorococcus marinus subsp. pastoris (strain CCMP1986 / NIES-2087 / MED4), this protein is Phosphate import ATP-binding protein PstB.